The sequence spans 461 residues: tRNA modification GTPase MnmE (461 aa).

(6S)-5-formyl-5,6,7,8-tetrahydrofolate contacts are provided by Arg27, Glu89, and Arg128. The TrmE-type G domain occupies 224 to 382 (GLATAIVGRP…LEELINKLFF (159 aa)). Residue Asn234 coordinates K(+). GTP contacts are provided by residues 234–239 (NVGKSS), 253–259 (TDVAGTT), and 278–281 (DTAG). A Mg(2+)-binding site is contributed by Ser238. K(+)-binding residues include Thr253, Val255, and Thr258. Position 259 (Thr259) interacts with Mg(2+). Lys461 lines the (6S)-5-formyl-5,6,7,8-tetrahydrofolate pocket.

This sequence belongs to the TRAFAC class TrmE-Era-EngA-EngB-Septin-like GTPase superfamily. TrmE GTPase family. As to quaternary structure, homodimer. Heterotetramer of two MnmE and two MnmG subunits. K(+) serves as cofactor.

It is found in the cytoplasm. Functionally, exhibits a very high intrinsic GTPase hydrolysis rate. Involved in the addition of a carboxymethylaminomethyl (cmnm) group at the wobble position (U34) of certain tRNAs, forming tRNA-cmnm(5)s(2)U34. The protein is tRNA modification GTPase MnmE of Lactobacillus helveticus (strain DPC 4571).